Here is a 301-residue protein sequence, read N- to C-terminus: D-alanine--D-alanine ligase (301 aa).

Residues 99–294 (KCILKAANIR…FSELIDMIID (196 aa)) enclose the ATP-grasp domain. 126-181 (IEGMGYPVVVKPTHGGSSVATFIIKEEKDIKNAVTEAFKWDSEVIIEKFIKGDEIT) is an ATP binding site. Mg(2+)-binding residues include aspartate 248, glutamate 261, and asparagine 263.

This sequence belongs to the D-alanine--D-alanine ligase family. It depends on Mg(2+) as a cofactor. Mn(2+) serves as cofactor.

The protein localises to the cytoplasm. It catalyses the reaction 2 D-alanine + ATP = D-alanyl-D-alanine + ADP + phosphate + H(+). It functions in the pathway cell wall biogenesis; peptidoglycan biosynthesis. Cell wall formation. This is D-alanine--D-alanine ligase from Clostridium botulinum (strain Eklund 17B / Type B).